We begin with the raw amino-acid sequence, 388 residues long: MRYLTAGESHGPRLTAIIEGVPAGLPLTAEDINGDLKRRQGGYGRGGRMKIESDKVEITSGVRHGKTTGAPITLHVINKDHQKWLDIMAVEDIEDRLKTKRKITHPRPGHADLVGGMKYRFDDLRNSLERSSARETTMRVAVGAVAKRILAELDIEIANHVVVFGGKEIDVPENLTVAQIKELAQQSEISVVNQEREQEIKDYIDQIKKEGDTIGGVVETVVGGVPVGLGSYVQWDTKLDAKIAQAVVSINAFKGVEFGLGFKDGYLRGSQVMDEILWNEEDGYTRRTNNLGGFEGGMTNGQPIVVRGVMKPIPTLYKPLMSVDIETHEPYKATVERSDPTALPAAGVVMESVVATVVANEILDKFSSDNLEELKEAVAHHRDYVKNF.

Positions 39 and 45 each coordinate NADP(+). FMN contacts are provided by residues arginine 130–serine 132, asparagine 251–alanine 252, glycine 296, lysine 311–threonine 315, and arginine 337.

It belongs to the chorismate synthase family. Homotetramer. Requires FMNH2 as cofactor.

It catalyses the reaction 5-O-(1-carboxyvinyl)-3-phosphoshikimate = chorismate + phosphate. It participates in metabolic intermediate biosynthesis; chorismate biosynthesis; chorismate from D-erythrose 4-phosphate and phosphoenolpyruvate: step 7/7. Catalyzes the anti-1,4-elimination of the C-3 phosphate and the C-6 proR hydrogen from 5-enolpyruvylshikimate-3-phosphate (EPSP) to yield chorismate, which is the branch point compound that serves as the starting substrate for the three terminal pathways of aromatic amino acid biosynthesis. This reaction introduces a second double bond into the aromatic ring system. The sequence is that of Chorismate synthase from Streptococcus thermophilus (strain CNRZ 1066).